The primary structure comprises 171 residues: UPF0763 protein Hac_0849 (171 aa).

It belongs to the UPF0763 family.

In Helicobacter acinonychis (strain Sheeba), this protein is UPF0763 protein Hac_0849.